The sequence spans 162 residues: Protein archease (162 aa).

Residues D34, D161, and I162 each contribute to the Ca(2+) site.

The protein belongs to the archease family. In terms of assembly, component of the tRNA-splicing ligase complex.

Component of the tRNA-splicing ligase complex required to facilitate the enzymatic turnover of catalytic subunit RTCB. Together with ddx1, acts by facilitating the guanylylation of RTCB, a key intermediate step in tRNA ligation. This Ictalurus punctatus (Channel catfish) protein is Protein archease.